The chain runs to 320 residues: Lipoyl synthase (320 aa).

Residues C67, C72, C78, C93, C97, C100, and S307 each contribute to the [4Fe-4S] cluster site. The 218-residue stretch at 79–296 (FNHGTATFMI…RDKAQAMGFE (218 aa)) folds into the Radical SAM core domain.

This sequence belongs to the radical SAM superfamily. Lipoyl synthase family. [4Fe-4S] cluster serves as cofactor.

It localises to the cytoplasm. The enzyme catalyses [[Fe-S] cluster scaffold protein carrying a second [4Fe-4S](2+) cluster] + N(6)-octanoyl-L-lysyl-[protein] + 2 oxidized [2Fe-2S]-[ferredoxin] + 2 S-adenosyl-L-methionine + 4 H(+) = [[Fe-S] cluster scaffold protein] + N(6)-[(R)-dihydrolipoyl]-L-lysyl-[protein] + 4 Fe(3+) + 2 hydrogen sulfide + 2 5'-deoxyadenosine + 2 L-methionine + 2 reduced [2Fe-2S]-[ferredoxin]. It participates in protein modification; protein lipoylation via endogenous pathway; protein N(6)-(lipoyl)lysine from octanoyl-[acyl-carrier-protein]: step 2/2. Catalyzes the radical-mediated insertion of two sulfur atoms into the C-6 and C-8 positions of the octanoyl moiety bound to the lipoyl domains of lipoate-dependent enzymes, thereby converting the octanoylated domains into lipoylated derivatives. This chain is Lipoyl synthase, found in Pasteurella multocida (strain Pm70).